Reading from the N-terminus, the 58-residue chain is Large ribosomal subunit protein bL32 (58 aa).

It belongs to the bacterial ribosomal protein bL32 family.

This chain is Large ribosomal subunit protein bL32, found in Caldicellulosiruptor saccharolyticus (strain ATCC 43494 / DSM 8903 / Tp8T 6331).